The chain runs to 505 residues: Catalase (505 aa).

Residues His-58 and Asn-131 contribute to the active site. Position 341 (Tyr-341) interacts with heme.

Belongs to the catalase family. The cofactor is heme.

It catalyses the reaction 2 H2O2 = O2 + 2 H2O. Its function is as follows. Decomposes hydrogen peroxide into water and oxygen; serves to protect cells from the toxic effects of hydrogen peroxide. The protein is Catalase (kat) of Methanosarcina barkeri (strain Fusaro / DSM 804).